Here is a 320-residue protein sequence, read N- to C-terminus: o-succinylbenzoate synthase (320 aa).

The active-site Proton donor is lysine 133. Residues aspartate 161, glutamate 190, and aspartate 213 each coordinate Mg(2+). Catalysis depends on lysine 235, which acts as the Proton acceptor.

The protein belongs to the mandelate racemase/muconate lactonizing enzyme family. MenC type 1 subfamily. A divalent metal cation serves as cofactor.

The catalysed reaction is (1R,6R)-6-hydroxy-2-succinyl-cyclohexa-2,4-diene-1-carboxylate = 2-succinylbenzoate + H2O. It functions in the pathway quinol/quinone metabolism; 1,4-dihydroxy-2-naphthoate biosynthesis; 1,4-dihydroxy-2-naphthoate from chorismate: step 4/7. Its pathway is quinol/quinone metabolism; menaquinone biosynthesis. Converts 2-succinyl-6-hydroxy-2,4-cyclohexadiene-1-carboxylate (SHCHC) to 2-succinylbenzoate (OSB). In Salmonella newport (strain SL254), this protein is o-succinylbenzoate synthase.